A 187-amino-acid polypeptide reads, in one-letter code: Large ribosomal subunit protein bL9 (187 aa).

Residues alanine 155–alanine 187 are disordered. Residues glutamate 166 to alanine 187 show a composition bias toward acidic residues.

Belongs to the bacterial ribosomal protein bL9 family.

In terms of biological role, binds to the 23S rRNA. The protein is Large ribosomal subunit protein bL9 of Rhodospirillum centenum (strain ATCC 51521 / SW).